Reading from the N-terminus, the 58-residue chain is UPF0339 protein MA_3316 (58 aa).

It belongs to the UPF0339 family.

This is UPF0339 protein MA_3316 from Methanosarcina acetivorans (strain ATCC 35395 / DSM 2834 / JCM 12185 / C2A).